Reading from the N-terminus, the 581-residue chain is Pyridine nucleotide-disulfide oxidoreductase domain-containing protein 2 (581 aa).

FAD is bound at residue 38 to 71; that stretch reads VVIGAGHNGLVAAAYLQRLGVNTAVFERRHVIGG.

Belongs to the carotenoid/retinoid oxidoreductase family. In terms of assembly, interacts with COX5B; this interaction may contribute to localize PYROXD2 to the inner face of the inner mitochondrial membrane.

It is found in the mitochondrion matrix. Probable oxidoreductase that may play a role as regulator of mitochondrial function. In Rattus norvegicus (Rat), this protein is Pyridine nucleotide-disulfide oxidoreductase domain-containing protein 2.